We begin with the raw amino-acid sequence, 76 residues long: Beta-defensin 121 (76 aa).

The N-terminal stretch at 1–15 is a signal peptide; sequence MKLLLLLLTVTLLLA. 3 disulfide bridges follow: Cys23/Cys50, Cys30/Cys44, and Cys34/Cys51.

The protein belongs to the beta-defensin family.

The protein localises to the secreted. Its function is as follows. Has antibacterial activity. The chain is Beta-defensin 121 (DEFB121) from Pan troglodytes (Chimpanzee).